Here is a 247-residue protein sequence, read N- to C-terminus: Carboxy-S-adenosyl-L-methionine synthase (247 aa).

S-adenosyl-L-methionine contacts are provided by residues Tyr39, 64-66 (GCS), 89-90 (DN), 117-118 (DI), Asn132, and Arg199.

It belongs to the class I-like SAM-binding methyltransferase superfamily. Cx-SAM synthase family. In terms of assembly, homodimer.

The catalysed reaction is prephenate + S-adenosyl-L-methionine = carboxy-S-adenosyl-L-methionine + 3-phenylpyruvate + H2O. Functionally, catalyzes the conversion of S-adenosyl-L-methionine (SAM) to carboxy-S-adenosyl-L-methionine (Cx-SAM). This is Carboxy-S-adenosyl-L-methionine synthase from Shigella sonnei (strain Ss046).